The following is a 364-amino-acid chain: Probable dual-specificity RNA methyltransferase RlmN (364 aa).

Glutamate 106 acts as the Proton acceptor in catalysis. In terms of domain architecture, Radical SAM core spans 112-350; the sequence is YPQRNTVCIS…SCTVRDTRGR (239 aa). The cysteines at positions 119 and 356 are disulfide-linked. 3 residues coordinate [4Fe-4S] cluster: cysteine 126, cysteine 130, and cysteine 133. Residues 177-178, serine 211, 234-236, and asparagine 313 contribute to the S-adenosyl-L-methionine site; these read GE and SLH. The active-site S-methylcysteine intermediate is the cysteine 356.

It belongs to the radical SAM superfamily. RlmN family. [4Fe-4S] cluster serves as cofactor.

Its subcellular location is the cytoplasm. It carries out the reaction adenosine(2503) in 23S rRNA + 2 reduced [2Fe-2S]-[ferredoxin] + 2 S-adenosyl-L-methionine = 2-methyladenosine(2503) in 23S rRNA + 5'-deoxyadenosine + L-methionine + 2 oxidized [2Fe-2S]-[ferredoxin] + S-adenosyl-L-homocysteine. The enzyme catalyses adenosine(37) in tRNA + 2 reduced [2Fe-2S]-[ferredoxin] + 2 S-adenosyl-L-methionine = 2-methyladenosine(37) in tRNA + 5'-deoxyadenosine + L-methionine + 2 oxidized [2Fe-2S]-[ferredoxin] + S-adenosyl-L-homocysteine. Functionally, specifically methylates position 2 of adenine 2503 in 23S rRNA and position 2 of adenine 37 in tRNAs. The chain is Probable dual-specificity RNA methyltransferase RlmN from Mycobacterium ulcerans (strain Agy99).